The sequence spans 392 residues: Phospho-N-acetylmuramoyl-pentapeptide-transferase (392 aa).

The next 10 membrane-spanning stretches (helical) occupy residues 29–49 (AVLA…WVIG), 76–96 (TMGG…WFDL), 100–120 (FVWI…VDDW), 137–157 (YLWQ…CISE), 192–212 (AVSY…VIVG), 225–245 (GLAI…AYVT), 262–282 (SGEL…FLWF), 289–309 (VFMG…IAII), 314–334 (IVLA…MLQV), and 369–389 (QVVV…LSTL).

The protein belongs to the glycosyltransferase 4 family. MraY subfamily. It depends on Mg(2+) as a cofactor.

It localises to the cell inner membrane. The catalysed reaction is UDP-N-acetyl-alpha-D-muramoyl-L-alanyl-gamma-D-glutamyl-meso-2,6-diaminopimeloyl-D-alanyl-D-alanine + di-trans,octa-cis-undecaprenyl phosphate = di-trans,octa-cis-undecaprenyl diphospho-N-acetyl-alpha-D-muramoyl-L-alanyl-D-glutamyl-meso-2,6-diaminopimeloyl-D-alanyl-D-alanine + UMP. It functions in the pathway cell wall biogenesis; peptidoglycan biosynthesis. Catalyzes the initial step of the lipid cycle reactions in the biosynthesis of the cell wall peptidoglycan: transfers peptidoglycan precursor phospho-MurNAc-pentapeptide from UDP-MurNAc-pentapeptide onto the lipid carrier undecaprenyl phosphate, yielding undecaprenyl-pyrophosphoryl-MurNAc-pentapeptide, known as lipid I. The polypeptide is Phospho-N-acetylmuramoyl-pentapeptide-transferase (Verminephrobacter eiseniae (strain EF01-2)).